The following is a 681-amino-acid chain: Mitosis inhibitor nif1 (681 aa).

Positions 22–43 (LNKKDGNDDDKAEHSKRSGYHG) are disordered. Positions 23 to 37 (NKKDGNDDDKAEHSK) are enriched in basic and acidic residues. Position 70 is a phosphoserine (serine 70). Disordered stretches follow at residues 80 to 104 (TTSG…SSPF) and 182 to 324 (YYHE…SSRQ). A compositionally biased stretch (low complexity) spans 92-103 (ESPASPAEASSP). A compositionally biased stretch (polar residues) spans 191–203 (TASNTSPTPNSIK). Serine 196 bears the Phosphoserine mark. Residues 238 to 278 (SSGDSTPLSGSSSSKGMLMSMSTSENHSLSSNPELSNSNLL) show a composition bias toward low complexity. The segment covering 296–306 (SSKEPDKEHST) has biased composition (basic and acidic residues). 2 Sel1-like repeats span residues 547-582 (ALIL…AWGD) and 583-618 (ADAQ…FQGI).

It localises to the cytoplasm. Its function is as follows. Functions as a negative regulator of mitosis. It interacts with the C-terminal of nim1, thereby inhibiting its kinase activity which phosphorylates wee1. The protein is Mitosis inhibitor nif1 (nif1) of Schizosaccharomyces pombe (strain 972 / ATCC 24843) (Fission yeast).